The sequence spans 531 residues: MEVLPGLLRLLAALVVAERWARDTSGAESLGLWPLPFAVDISPRSLHLSPNNFFFGHSPTSKAGSSCEILQEAFRRYYDFIFGFYKWHQGSYQLCFGTELQQLQVHVESECDTFPSISSNESYVLHVKGPEALLRANTVWGALRGLETFSQLIYQDSYGTFTVNESEIIDFPRFPHRGILIDTGRHFLSVKTIFKTLDAMAFNKFNVLHWHIVDDQSFPYQSINFGVLSSKGSYSLSHVYTPNDVRMVIEYARIRGIRVMPEFDTPGHSRSWGKGQKDLLTPCYRKQVLSGTFGPINPILNTTYNFLSKFFKEISTVFPDEFIHIGGDEVDFDCWASNSEILQFMQEKGFSQISLNSNLCTVFKISNMISAMKKRPIVWQEAFDGRDKFMPGTVVQVWKIEDYKWEQSLITKAGFPVILSAPWYLDLISYGQDWKNYYEVEPQDFPGSDKERKRVLGGEACLWGEYVDATNLTPRLWPRASAVGERLWSHKDVRDIHDAYSRLTIHRCRMVRRGIAAEPLFTGYCNHEHRM.

An N-terminal signal peptide occupies residues 1-21; that stretch reads MEVLPGLLRLLAALVVAERWA. Residues Cys67 and Cys111 are joined by a disulfide bond. N-linked (GlcNAc...) asparagine glycosylation is found at Asn120, Asn164, and Asn301. 2 disulfides stabilise this stretch: Cys283–Cys334 and Cys508–Cys525. The Proton donor role is filled by Glu329.

This sequence belongs to the glycosyl hydrolase 20 family. In terms of assembly, there are 3 forms of beta-hexosaminidase: hexosaminidase A is a heterodimer composed of one subunit alpha and one subunit beta (chain A and B); hexosaminidase B is a homodimer of two beta subunits (two chains A and B); hexosaminidase S is a homodimer of two alpha subunits. The composition of the dimer (isozyme A versus isozyme S) has a significant effect on the substrate specificity of the alpha subunit active site.

It localises to the lysosome. It is found in the cytoplasmic vesicle. Its subcellular location is the secretory vesicle. The protein localises to the cortical granule. The enzyme catalyses Hydrolysis of terminal non-reducing N-acetyl-D-hexosamine residues in N-acetyl-beta-D-hexosaminides.. The catalysed reaction is N-acetyl-beta-D-galactosaminyl-(1-&gt;4)-beta-D-3-sulfogalactosyl-(1-&gt;4)-beta-D-glucosyl-(1&lt;-&gt;1')-ceramide + H2O = a beta-D-3-sulfogalactosyl-(1-&gt;4)-beta-D-glucosyl-(1&lt;-&gt;1')-ceramide + N-acetyl-beta-D-galactosamine. It catalyses the reaction a ganglioside GM2 (d18:1(4E)) + H2O = a ganglioside GM3 (d18:1(4E)) + N-acetyl-beta-D-galactosamine. It carries out the reaction a ganglioside GM2 + H2O = a ganglioside GM3 + N-acetyl-beta-D-galactosamine. The enzyme catalyses beta-D-GalNAc-(1-&gt;4)-alpha-L-IdoA-(1-&gt;3)-beta-D-GalNAc-4-sulfate-(1-&gt;4)-alpha-L-IdoA-(1-&gt;3)-D-GalNAc-4-sulfate + H2O = alpha-L-IdoA-(1-&gt;3)-beta-D-GalNAc-4-sulfate-(1-&gt;4)-alpha-L-IdoA-(1-&gt;3)-D-GalNAc-4-sulfate + N-acetyl-D-galactosamine. The catalysed reaction is N-acetyl-beta-D-6-sulfogalactosaminyl-(1-&gt;4)-alpha-L-iduronyl-(1-&gt;3)-N-acetyl-D-6-sulfogalactosamine + H2O = alpha-L-iduronyl-(1-&gt;3)-N-acetyl-D-6-sulfogalactosamine + N-acetyl-D-6-sulfogalactosamine. With respect to regulation, addition of GM2A stimulates the hydrolysis of sulfated glycosphingolipid SM2 and the ganglioside GM2. Functionally, hydrolyzes the non-reducing end N-acetyl-D-hexosamine and/or sulfated N-acetyl-D-hexosamine of glycoconjugates, such as the oligosaccharide moieties from proteins and neutral glycolipids, or from certain mucopolysaccharides. The isozyme B does not hydrolyze each of these substrates, however hydrolyzes efficiently neutral oligosaccharide. Only the isozyme A is responsible for the degradation of GM2 gangliosides in the presence of GM2A. During fertilization is responsible, at least in part, for the zona block to polyspermy. Present in the cortical granules of non-activated oocytes, is exocytosed during the cortical reaction in response to oocyte activation and inactivates the sperm galactosyltransferase-binding site, accounting for the block in sperm binding to the zona pellucida. The polypeptide is Beta-hexosaminidase subunit beta (Sus scrofa (Pig)).